Here is an 81-residue protein sequence, read N- to C-terminus: ATP synthase subunit c (81 aa).

2 consecutive transmembrane segments (helical) span residues Met-4–Ala-24 and Val-57–Ala-77.

It belongs to the ATPase C chain family. F-type ATPases have 2 components, F(1) - the catalytic core - and F(0) - the membrane proton channel. F(1) has five subunits: alpha(3), beta(3), gamma(1), delta(1), epsilon(1). F(0) has three main subunits: a(1), b(2) and c(10-14). The alpha and beta chains form an alternating ring which encloses part of the gamma chain. F(1) is attached to F(0) by a central stalk formed by the gamma and epsilon chains, while a peripheral stalk is formed by the delta and b chains.

Its subcellular location is the cell membrane. In terms of biological role, f(1)F(0) ATP synthase produces ATP from ADP in the presence of a proton or sodium gradient. F-type ATPases consist of two structural domains, F(1) containing the extramembraneous catalytic core and F(0) containing the membrane proton channel, linked together by a central stalk and a peripheral stalk. During catalysis, ATP synthesis in the catalytic domain of F(1) is coupled via a rotary mechanism of the central stalk subunits to proton translocation. Its function is as follows. Key component of the F(0) channel; it plays a direct role in translocation across the membrane. A homomeric c-ring of between 10-14 subunits forms the central stalk rotor element with the F(1) delta and epsilon subunits. The polypeptide is ATP synthase subunit c (Mycobacterium leprae (strain TN)).